The sequence spans 131 residues: MSMSDPIADMLTRIRNAQMVEKTSVAMPSSKLKSAIAQVLKDEGYIDGFAVKTTDGKSQLEISLKYYAGRPVIERIERVSRPGLRIYKGRHDIPTVMNGLGVAIVTTPQGVMTDRKARAAGIGGEVLCYVA.

The protein belongs to the universal ribosomal protein uS8 family. In terms of assembly, part of the 30S ribosomal subunit. Contacts proteins S5 and S12.

Its function is as follows. One of the primary rRNA binding proteins, it binds directly to 16S rRNA central domain where it helps coordinate assembly of the platform of the 30S subunit. In Leptothrix cholodnii (strain ATCC 51168 / LMG 8142 / SP-6) (Leptothrix discophora (strain SP-6)), this protein is Small ribosomal subunit protein uS8.